The chain runs to 241 residues: Small ribosomal subunit protein bS6 (241 aa).

Positions K97–T108 are enriched in basic residues. Residues K97 to N241 form a disordered region. Residues L109 to N118 are compositionally biased toward basic and acidic residues. Composition is skewed to low complexity over residues Q130–Q151 and D161–G182. Basic and acidic residues predominate over residues Y183–E193. Residues N194–Q210 are compositionally biased toward low complexity.

The protein belongs to the bacterial ribosomal protein bS6 family.

In terms of biological role, binds together with bS18 to 16S ribosomal RNA. The sequence is that of Small ribosomal subunit protein bS6 from Mesomycoplasma hyopneumoniae (strain J / ATCC 25934 / NCTC 10110) (Mycoplasma hyopneumoniae).